Here is an 843-residue protein sequence, read N- to C-terminus: Protein P (843 aa).

Positions 1–177 (MPLSYQHFRK…FCGSPYSWEQ (177 aa)) are terminal protein domain (TP). Residues 178-346 (ELQHGRLVFQ…YCLSHIVNLL (169 aa)) are spacer. The interval 347 to 690 (EDWGPCTEHG…YMNLYPVARQ (344 aa)) is polymerase/reverse transcriptase domain (RT). The 244-residue stretch at 357 to 600 (EHHIRIPRTP…YSLNFMGYVI (244 aa)) folds into the Reverse transcriptase domain. Asp-429, Asp-551, and Asp-552 together coordinate Mg(2+).

It belongs to the hepadnaviridae P protein family.

It carries out the reaction DNA(n) + a 2'-deoxyribonucleoside 5'-triphosphate = DNA(n+1) + diphosphate. It catalyses the reaction Endonucleolytic cleavage to 5'-phosphomonoester.. Activated by host HSP70 and HSP40 in vitro to be able to bind the epsilon loop of the pgRNA. Because deletion of the RNase H region renders the protein partly chaperone-independent, the chaperones may be needed indirectly to relieve occlusion of the RNA-binding site by this domain. Inhibited by several reverse-transcriptase inhibitors: Lamivudine, Adefovir and Entecavir. In terms of biological role, multifunctional enzyme that converts the viral RNA genome into dsDNA in viral cytoplasmic capsids. This enzyme displays a DNA polymerase activity that can copy either DNA or RNA templates, and a ribonuclease H (RNase H) activity that cleaves the RNA strand of RNA-DNA heteroduplexes in a partially processive 3'- to 5'-endonucleasic mode. Neo-synthesized pregenomic RNA (pgRNA) are encapsidated together with the P protein, and reverse-transcribed inside the nucleocapsid. Initiation of reverse-transcription occurs first by binding the epsilon loop on the pgRNA genome, and is initiated by protein priming, thereby the 5'-end of (-)DNA is covalently linked to P protein. Partial (+)DNA is synthesized from the (-)DNA template and generates the relaxed circular DNA (RC-DNA) genome. After budding and infection, the RC-DNA migrates in the nucleus, and is converted into a plasmid-like covalently closed circular DNA (cccDNA). The activity of P protein does not seem to be necessary for cccDNA generation, and is presumably released from (+)DNA by host nuclear DNA repair machinery. The chain is Protein P from Homo sapiens (Human).